The sequence spans 185 residues: Ribosome-recycling factor (185 aa).

This sequence belongs to the RRF family.

The protein resides in the cytoplasm. In terms of biological role, responsible for the release of ribosomes from messenger RNA at the termination of protein biosynthesis. May increase the efficiency of translation by recycling ribosomes from one round of translation to another. The sequence is that of Ribosome-recycling factor from Mycobacterium bovis (strain BCG / Pasteur 1173P2).